Here is a 404-residue protein sequence, read N- to C-terminus: S-adenosylmethionine synthase (404 aa).

His18 is a binding site for ATP. Residue Asp20 coordinates Mg(2+). A K(+)-binding site is contributed by Glu46. 2 residues coordinate L-methionine: Glu59 and Gln102. Residues 102 to 112 (QSPDIAQGVDT) are flexible loop. ATP-binding positions include 177–179 (DGK), 249–250 (KF), Asp258, 264–265 (RK), Ala281, and Lys285. Asp258 is an L-methionine binding site. Residue Lys289 participates in L-methionine binding.

The protein belongs to the AdoMet synthase family. Homotetramer; dimer of dimers. Mg(2+) is required as a cofactor. K(+) serves as cofactor.

It localises to the cytoplasm. It catalyses the reaction L-methionine + ATP + H2O = S-adenosyl-L-methionine + phosphate + diphosphate. Its pathway is amino-acid biosynthesis; S-adenosyl-L-methionine biosynthesis; S-adenosyl-L-methionine from L-methionine: step 1/1. Functionally, catalyzes the formation of S-adenosylmethionine (AdoMet) from methionine and ATP. The overall synthetic reaction is composed of two sequential steps, AdoMet formation and the subsequent tripolyphosphate hydrolysis which occurs prior to release of AdoMet from the enzyme. The sequence is that of S-adenosylmethionine synthase from Nocardia farcinica (strain IFM 10152).